The sequence spans 152 residues: Acidic phospholipase A2 S17-58 (152 aa).

The N-terminal stretch at 1 to 19 (MYPAHLLVLLAVCVSLLGA) is a signal peptide. A propeptide spanning residues 20 to 27 (SNIPLPSL) is cleaved from the precursor. Intrachain disulfides connect Cys-38–Cys-104, Cys-54–Cys-151, Cys-56–Cys-72, Cys-71–Cys-132, Cys-78–Cys-125, Cys-88–Cys-118, and Cys-111–Cys-123. Ca(2+)-binding residues include Tyr-55, Gly-57, and Gly-59. His-75 is a catalytic residue. Position 76 (Asp-76) interacts with Ca(2+). Asp-126 is an active-site residue.

It belongs to the phospholipase A2 family. Group I subfamily. D49 sub-subfamily. Ca(2+) serves as cofactor. As to expression, expressed by the venom gland.

Its subcellular location is the secreted. The enzyme catalyses a 1,2-diacyl-sn-glycero-3-phosphocholine + H2O = a 1-acyl-sn-glycero-3-phosphocholine + a fatty acid + H(+). Functionally, snake venom phospholipase A2 (PLA2) that inhibits collagen-induced platelet aggregation. PLA2 catalyzes the calcium-dependent hydrolysis of the 2-acyl groups in 3-sn-phosphoglycerides. In Austrelaps superbus (Lowland copperhead snake), this protein is Acidic phospholipase A2 S17-58.